The primary structure comprises 343 residues: Glycerol-3-phosphate dehydrogenase [NAD(P)+] (343 aa).

S11, W12, R32, and K106 together coordinate NADPH. Positions 106, 137, and 139 each coordinate sn-glycerol 3-phosphate. A141 serves as a coordination point for NADPH. Residues K192, D245, S255, R256, and N257 each contribute to the sn-glycerol 3-phosphate site. The active-site Proton acceptor is K192. R256 contributes to the NADPH binding site. NADPH is bound by residues V280 and E282.

This sequence belongs to the NAD-dependent glycerol-3-phosphate dehydrogenase family.

It localises to the cytoplasm. The enzyme catalyses sn-glycerol 3-phosphate + NAD(+) = dihydroxyacetone phosphate + NADH + H(+). The catalysed reaction is sn-glycerol 3-phosphate + NADP(+) = dihydroxyacetone phosphate + NADPH + H(+). It participates in membrane lipid metabolism; glycerophospholipid metabolism. Its function is as follows. Catalyzes the reduction of the glycolytic intermediate dihydroxyacetone phosphate (DHAP) to sn-glycerol 3-phosphate (G3P), the key precursor for phospholipid synthesis. In Syntrophomonas wolfei subsp. wolfei (strain DSM 2245B / Goettingen), this protein is Glycerol-3-phosphate dehydrogenase [NAD(P)+].